Consider the following 268-residue polypeptide: Cytolethal distending toxin subunit A (268 aa).

Positions 1–19 (MQKIIVFILCCFMTFFLYA) are cleaved as a signal peptide. The N-palmitoyl cysteine moiety is linked to residue C20. A lipid anchor (S-diacylglycerol cysteine) is attached at C20. In terms of domain architecture, Ricin B-type lectin spans 112 to 252 (VSDFLTILGP…DNFDQQWFLT (141 aa)). A mediates binding to target cells region spans residues 129-140 (WALAQGNWIWGY).

In terms of assembly, heterotrimer of 3 subunits, CdtA, CdtB and CdtC.

The protein localises to the cell outer membrane. In terms of biological role, CDTs are cytotoxins which induce cell distension, growth arrest in G2/M phase, nucleus swelling, and chromatin fragmentation in HeLa cells. This chain is Cytolethal distending toxin subunit A (cdtA), found in Campylobacter jejuni subsp. jejuni serotype O:2 (strain ATCC 700819 / NCTC 11168).